We begin with the raw amino-acid sequence, 32 residues long: Photosystem II reaction center protein Z (32 aa).

A helical transmembrane segment spans residues 12-32; the sequence is FGAAAWIGLVLLVGTLYYFVV.

Belongs to the PsbZ family. As to quaternary structure, PSII is composed of 1 copy each of membrane proteins PsbA, PsbB, PsbC, PsbD, PsbE, PsbF, PsbH, PsbI, PsbJ, PsbK, PsbL, PsbM, PsbT, PsbY, PsbZ, Psb30/Ycf12, at least 3 peripheral proteins of the oxygen-evolving complex and a large number of cofactors. It forms dimeric complexes.

Its subcellular location is the plastid. The protein resides in the chloroplast thylakoid membrane. Functionally, may control the interaction of photosystem II (PSII) cores with the light-harvesting antenna, regulates electron flow through the 2 photosystem reaction centers. PSII is a light-driven water plastoquinone oxidoreductase, using light energy to abstract electrons from H(2)O, generating a proton gradient subsequently used for ATP formation. The chain is Photosystem II reaction center protein Z from Euglena granulata.